We begin with the raw amino-acid sequence, 322 residues long: Ribosomal RNA small subunit methyltransferase H (322 aa).

Residues 40 to 42 (GGH), D60, F84, D106, and Q113 each bind S-adenosyl-L-methionine.

It belongs to the methyltransferase superfamily. RsmH family.

Its subcellular location is the cytoplasm. The enzyme catalyses cytidine(1402) in 16S rRNA + S-adenosyl-L-methionine = N(4)-methylcytidine(1402) in 16S rRNA + S-adenosyl-L-homocysteine + H(+). In terms of biological role, specifically methylates the N4 position of cytidine in position 1402 (C1402) of 16S rRNA. The sequence is that of Ribosomal RNA small subunit methyltransferase H from Mannheimia succiniciproducens (strain KCTC 0769BP / MBEL55E).